Here is a 506-residue protein sequence, read N- to C-terminus: Maturase K (506 aa).

This sequence belongs to the intron maturase 2 family. MatK subfamily.

The protein resides in the plastid. The protein localises to the chloroplast. Functionally, usually encoded in the trnK tRNA gene intron. Probably assists in splicing its own and other chloroplast group II introns. The sequence is that of Maturase K from Arctostaphylos uva-ursi (Bearberry).